Reading from the N-terminus, the 487-residue chain is Cytochrome P450 monooxygenase pyvB (487 aa).

The chain crosses the membrane as a helical span at residues 17–37 (PAYSSVVIGALVVCLVCLVWP). Cys-426 contributes to the heme binding site.

The protein belongs to the cytochrome P450 family. It depends on heme as a cofactor.

Its subcellular location is the membrane. Its pathway is secondary metabolite biosynthesis. Its function is as follows. Cytochrome P450 monooxygenase; part of the gene cluster that mediates the biosynthesis of pyranoviolin A, a pyranonigrin analog with a C-3 methoxy group. Initially, the PKS portion of pyvA synthesizes C-10 carbon chain from 5 molecules of malonyl-CoA, which is then condensed with the thiolation (T) domain-bound glycine activated by the adenylation (A) domain. The subsequent chain release by Dieckmann condensation (DKC) could be catalyzed by the TE domain present at the C-terminus of pyvA and/or the alpha/beta hydrolase pyvD, installing the tetramic acid moiety. The FAD-dependent monooxygenase pyvC next epoxidizes one of the olefins of the polyketide part, and the epoxide ring-opening induces the dihydro-gamma-pyrone ring formation. The cytochrome P450 monooxygeanse pyvB would be responsible for the 2 consecutive reactions, in which the dihydro-gamma-pyrone is oxidized to gamma-pyrone and C-7 is hydroxylated to yield pyranonigrin F. Finally, the O-methyltransferase pyvH methylates the C-3 hydroxy group to complete the biosynthesis. In Aspergillus violaceofuscus (strain CBS 115571), this protein is Cytochrome P450 monooxygenase pyvB.